The chain runs to 277 residues: Large ribosomal subunit protein uL2 (277 aa).

Disordered regions lie at residues 32 to 58 and 225 to 277; these read KSLT…RGGG and VAMN…RRNN.

It belongs to the universal ribosomal protein uL2 family. Part of the 50S ribosomal subunit. Forms a bridge to the 30S subunit in the 70S ribosome.

Functionally, one of the primary rRNA binding proteins. Required for association of the 30S and 50S subunits to form the 70S ribosome, for tRNA binding and peptide bond formation. It has been suggested to have peptidyltransferase activity; this is somewhat controversial. Makes several contacts with the 16S rRNA in the 70S ribosome. The chain is Large ribosomal subunit protein uL2 from Borrelia recurrentis (strain A1).